We begin with the raw amino-acid sequence, 579 residues long: O-fucosyltransferase 24 (579 aa).

The chain crosses the membrane as a helical; Signal-anchor for type II membrane protein span at residues 58–78; the sequence is LWAFSLFLLSILGISLRLGLC. The N-linked (GlcNAc...) asparagine glycan is linked to N133. 355–357 serves as a coordination point for substrate; the sequence is HLR. N-linked (GlcNAc...) asparagine glycosylation is found at N528, N573, and N576.

Belongs to the glycosyltransferase GT106 family.

It localises to the membrane. It functions in the pathway glycan metabolism. The polypeptide is O-fucosyltransferase 24 (Arabidopsis thaliana (Mouse-ear cress)).